A 235-amino-acid chain; its full sequence is Transcriptional regulatory protein MalR (235 aa).

The Response regulatory domain occupies asparagine 3–arginine 119. Aspartate 54 is subject to 4-aspartylphosphate. The segment at residues threonine 178 to lysine 197 is a DNA-binding region (H-T-H motif).

In terms of processing, phosphorylated and activated by MalK.

The protein localises to the cytoplasm. Functionally, member of a two-component regulatory system MalK/MalR. Activates transcription of maeA, maeN and yflS in presence of malate by binding to their promoter region. The chain is Transcriptional regulatory protein MalR (malR) from Bacillus subtilis (strain 168).